Reading from the N-terminus, the 165-residue chain is Growth arrest and DNA damage-inducible protein GADD45 alpha (165 aa).

Residue T2 is modified to Phosphothreonine.

It belongs to the GADD45 family. As to quaternary structure, interacts with AURKA, PCNA, GADD45GIP1 and MAPK14.

Its subcellular location is the nucleus. Functionally, might affect PCNA interaction with some CDK (cell division protein kinase) complexes; stimulates DNA excision repair in vitro and inhibits entry of cells into S phase. In T-cells, functions as a regulator of p38 MAPKs by inhibiting p88 phosphorylation and activity. This chain is Growth arrest and DNA damage-inducible protein GADD45 alpha (GADD45A), found in Felis catus (Cat).